The sequence spans 209 residues: Uracil phosphoribosyltransferase (209 aa).

Residues Arg78, Arg103, and Asp130–Thr138 contribute to the 5-phospho-alpha-D-ribose 1-diphosphate site. Residues Ile193 and Gly198 to Ala200 each bind uracil. A 5-phospho-alpha-D-ribose 1-diphosphate-binding site is contributed by Asp199.

The protein belongs to the UPRTase family. The cofactor is Mg(2+).

It catalyses the reaction UMP + diphosphate = 5-phospho-alpha-D-ribose 1-diphosphate + uracil. It functions in the pathway pyrimidine metabolism; UMP biosynthesis via salvage pathway; UMP from uracil: step 1/1. Allosterically activated by GTP. Catalyzes the conversion of uracil and 5-phospho-alpha-D-ribose 1-diphosphate (PRPP) to UMP and diphosphate. The chain is Uracil phosphoribosyltransferase from Campylobacter fetus subsp. fetus (strain 82-40).